Here is a 132-residue protein sequence, read N- to C-terminus: Small ribosomal subunit protein uS8 (132 aa).

The protein belongs to the universal ribosomal protein uS8 family. As to quaternary structure, part of the 30S ribosomal subunit. Contacts proteins S5 and S12.

Its function is as follows. One of the primary rRNA binding proteins, it binds directly to 16S rRNA central domain where it helps coordinate assembly of the platform of the 30S subunit. The chain is Small ribosomal subunit protein uS8 from Streptococcus gordonii (strain Challis / ATCC 35105 / BCRC 15272 / CH1 / DL1 / V288).